Reading from the N-terminus, the 509-residue chain is tRNA (guanine(37)-N(1))-methyltransferase (509 aa).

A mitochondrion-targeting transit peptide spans 1 to 57 (MVLWILWRPFGFSRRLLKLERHSITESKSLIPLAWTSLTQTLSESPGIFLLGQRKRF). Residues His-289, 327 to 328 (DL), 355 to 356 (DG), and Asn-387 each bind S-adenosyl-L-methionine. Residues 478-509 (TKNPENHEDPPLKRQRTAEAFSDEKTQIASNT) are disordered.

The protein belongs to the class I-like SAM-binding methyltransferase superfamily. TRM5/TYW2 family. As to quaternary structure, monomer.

The protein resides in the mitochondrion matrix. It is found in the nucleus. It localises to the cytoplasm. It catalyses the reaction guanosine(37) in tRNA + S-adenosyl-L-methionine = N(1)-methylguanosine(37) in tRNA + S-adenosyl-L-homocysteine + H(+). In terms of biological role, involved in mitochondrial tRNA methylation. Specifically methylates the N1 position of guanosine-37 in various tRNAs. Methylation is not dependent on the nature of the nucleoside 5' of the target nucleoside. This is the first step in the biosynthesis of wybutosine (yW), a modified base adjacent to the anticodon of tRNAs and required for accurate decoding. In Macaca mulatta (Rhesus macaque), this protein is tRNA (guanine(37)-N(1))-methyltransferase.